Reading from the N-terminus, the 153-residue chain is Transcriptional repressor NrdR 2 (153 aa).

A zinc finger lies at 3–34 (CPFCGQDDTQVKDSRPTDDNAAIRRRRACPGC). The region spanning 49–139 (LVVVKKDGSR…VYRNFREAKD (91 aa)) is the ATP-cone domain.

It belongs to the NrdR family. It depends on Zn(2+) as a cofactor.

In terms of biological role, negatively regulates transcription of bacterial ribonucleotide reductase nrd genes and operons by binding to NrdR-boxes. The polypeptide is Transcriptional repressor NrdR 2 (Paramagnetospirillum magneticum (strain ATCC 700264 / AMB-1) (Magnetospirillum magneticum)).